We begin with the raw amino-acid sequence, 883 residues long: Translation initiation factor IF-2 (883 aa).

Disordered regions lie at residues 1–96 (MVDT…RSGM) and 132–259 (QRRA…RGRL). The segment covering 57-66 (PAEPAAAAPE) has biased composition (low complexity). Over residues 72–87 (TPAPPAVSPRQQPRPS) the composition is skewed to pro residues. Positions 132–188 (QRRAAQELVDKAEREAAEVRRKAEEERHRHEEETKRKAETEAKKRFGEAEPAKKPAD) are enriched in basic and acidic residues. Low complexity predominate over residues 191 to 217 (PASTSTTTTAPRAPVTTTTRPPAVAAE). The tr-type G domain occupies 380 to 551 (PRSPVVTVMG…ALQAELLDLK (172 aa)). The segment at 389–396 (GHVDHGKT) is G1. 389–396 (GHVDHGKT) lines the GTP pocket. The tract at residues 414–418 (GITQH) is G2. The segment at 437–440 (DTPG) is G3. Residues 437 to 441 (DTPGH) and 491 to 494 (NKID) contribute to the GTP site. Positions 491–494 (NKID) are G4. Residues 527 to 529 (SAK) are G5.

This sequence belongs to the TRAFAC class translation factor GTPase superfamily. Classic translation factor GTPase family. IF-2 subfamily.

It localises to the cytoplasm. Functionally, one of the essential components for the initiation of protein synthesis. Protects formylmethionyl-tRNA from spontaneous hydrolysis and promotes its binding to the 30S ribosomal subunits. Also involved in the hydrolysis of GTP during the formation of the 70S ribosomal complex. The protein is Translation initiation factor IF-2 of Rhodopseudomonas palustris (strain BisB5).